The sequence spans 1066 residues: MSWLRTSPLRQSLTRSGSSSGNGSSGTATTMRQRPIDAATDCDPRACYDSFCKHWQQAHEIIQHPGTPTHDDVLGVVSHLDYMVTLLLVELHHCNKVSLPSADAAPPAAPCLEYLLSENLLDKLYEWASSTGRYANAVRLEQLKLYELLVSHSRHQLLCHEPFLRPLLKILASSQGEIFPPDLEKRLVILLNQLCVVLMQNVHLLDLFFFSAQTQVQEQIQNGSLPAPKSGTTTNFIIFSLLIPYVHREGSLGHQARDALLLCMALSQKNSNIGHYIAQYSSICPLLVTGLGGLYSRLPNSIEINSIDWHRITPDDVTEIPELTLFMNALEFCNAVVQVAHEMIKQQLLDFMYQGFIVPVLGPAILQTNIDSQISAMSYLDLILRSITEPGLMRAFVKFLLDTEKFDGERILDALVERLHSPDANLCMVTMALFDTLLGLHCEDLMLELLLKYMLPGKHVPISHRHKINKIDPYLNTTEFFLELTPDVMKRARDLARPKSVQELVDPAATATTTATAPSMLLSLPSPVMSKTIGANWNYYGHYTGDSLYANVQAYLFEAHSRIAQCQRDCRKWANSYRYQKWPRQGQARATAHALELARQFFSEFGTAAPVVAAPVASEAGEKQLDSLQSIGESSGYESFKWRPADEDAEGIDVTTTTTASASDTDLEHNNNSSSISSGRRDSWRISHSSRNEILLTDLDFSEDLFAQGTVSLGPFLNAIWSKLQTFTSNSLYVNLHLTGLITRLAWYPLPLIHSLLLRSDIAITSDTPSFHQVLRMLKQQIDAELPVAENSLEIIDVARSYLIDREFRLVNARKITDNSPLHQQLQHQQQHQQLAQTNSHTQQQQQQQQQQAQQRSTYATLSAATPVQASPTSAYDPFRRSDNKRRSISRSITSMFSRRSTSSTPASNGNSASSGLSQIYAFFTGAASTLVGGSGGEGSGARGAAQDSTRGNTCETSLSTAPRQEPQTNVGSSSNSSIGSSTQTLSGTHSSSTLHGVESGLQTGNFNSEPVSLDSVASMGIIANTSGTERSRDLALCAVLLDEWLKELAAVALEQSVVLVTEQLL.

Residues 1–11 (MSWLRTSPLRQ) show a composition bias toward polar residues. The interval 1 to 35 (MSWLRTSPLRQSLTRSGSSSGNGSSGTATTMRQRP) is disordered. Positions 12-30 (SLTRSGSSSGNGSSGTATT) are enriched in low complexity. Phosphoserine is present on Ser500. Residues 651–682 (GIDVTTTTTASASDTDLEHNNNSSSISSGRRD) form a disordered region. The span at 655-678 (TTTTTASASDTDLEHNNNSSSISS) shows a compositional bias: low complexity. Ser820 is modified (phosphoserine). 2 disordered regions span residues 821–913 (PLHQ…GNSA) and 935–1007 (SGGE…TGNF). The span at 822 to 855 (LHQQLQHQQQHQQLAQTNSHTQQQQQQQQQQAQQ) shows a compositional bias: low complexity. Positions 856–874 (RSTYATLSAATPVQASPTS) are enriched in polar residues. Positions 890-913 (SRSITSMFSRRSTSSTPASNGNSA) are enriched in low complexity. The segment covering 947-971 (QDSTRGNTCETSLSTAPRQEPQTNV) has biased composition (polar residues). Over residues 972–997 (GSSSNSSIGSSTQTLSGTHSSSTLHG) the composition is skewed to low complexity.

Belongs to the FHIP family.

The chain is FHIP family protein GI14169 from Drosophila mojavensis (Fruit fly).